The following is a 788-amino-acid chain: 5-methyltetrahydropteroyltriglutamate--homocysteine methyltransferase (788 aa).

5-methyltetrahydropteroyltri-L-glutamate-binding positions include 24–27 (RELK) and lysine 140. L-homocysteine is bound by residues 463-465 (IGS) and glutamate 516. Residues 463–465 (IGS) and glutamate 516 each bind L-methionine. 5-methyltetrahydropteroyltri-L-glutamate is bound by residues 547 to 548 (RC) and tryptophan 593. L-homocysteine is bound at residue aspartate 631. An L-methionine-binding site is contributed by aspartate 631. Position 637 (glutamate 637) interacts with 5-methyltetrahydropteroyltri-L-glutamate. Zn(2+)-binding residues include histidine 673, cysteine 675, and glutamate 697. The active-site Proton donor is histidine 726. Position 758 (cysteine 758) interacts with Zn(2+).

It belongs to the vitamin-B12 independent methionine synthase family. Zn(2+) serves as cofactor.

It catalyses the reaction 5-methyltetrahydropteroyltri-L-glutamate + L-homocysteine = tetrahydropteroyltri-L-glutamate + L-methionine. The protein operates within amino-acid biosynthesis; L-methionine biosynthesis via de novo pathway; L-methionine from L-homocysteine (MetE route): step 1/1. In terms of biological role, catalyzes the transfer of a methyl group from 5-methyltetrahydrofolate to homocysteine resulting in methionine formation. In Rhodopseudomonas palustris (strain ATCC BAA-98 / CGA009), this protein is 5-methyltetrahydropteroyltriglutamate--homocysteine methyltransferase.